The sequence spans 247 residues: uncharacterized protein (247 aa).

Residues 161–187 (KEQSDATSDATTSEKNKSPECPKATTE) are disordered. The segment covering 172–187 (TSEKNKSPECPKATTE) has biased composition (basic and acidic residues).

This is an uncharacterized protein from Mus musculus (Mouse).